The chain runs to 444 residues: D(2) dopamine receptor (444 aa).

Residues 1–37 lie on the Extracellular side of the membrane; sequence MDPLNLSWYDDDLERQNWSRPFNGSEGKADRPHYNYY. Asparagine 5, asparagine 17, and asparagine 23 each carry an N-linked (GlcNAc...) asparagine glycan. A helical transmembrane segment spans residues 38–60; it reads AMLLTLLIFIIVFGNVLVCMAVS. The Cytoplasmic segment spans residues 61–70; sequence REKALQTTTN. A helical transmembrane segment spans residues 71-93; it reads YLIVSLAVADLLVATLVMPWVVY. Residues 94–108 are Extracellular-facing; sequence LEVVGEWKFSRIHCD. A disulfide bridge connects residues cysteine 107 and cysteine 182. A helical transmembrane segment spans residues 109-130; sequence IFVTLDVMMCTASILNLCAISI. At 131–151 the chain is on the cytoplasmic side; sequence DRYTAVAMPMLYNTRYSSKRR. Residues 152–172 form a helical membrane-spanning segment; sequence VTVMIAIVWVLSFTISCPLLF. The Extracellular portion of the chain corresponds to 173-188; that stretch reads GLNNTDQNECIIANPA. A helical membrane pass occupies residues 189–213; the sequence is FVVYSSIVSFYVPFIVTLLVYIKIY. The tract at residues 211 to 374 is interaction with PPP1R9B; that stretch reads KIYIVLRKRR…SQQKEKKATQ (164 aa). Residues 214–374 lie on the Cytoplasmic side of the membrane; the sequence is IVLRKRRKRV…SQQKEKKATQ (161 aa). The tract at residues 282–329 is disordered; sequence EMLSSTSPPERTRYSPIPPSHHQLTLPDPSHHGLHSNPDSPAKPEKNG. The chain crosses the membrane as a helical span at residues 375–396; sequence MLAIVLGVFIICWLPFFITHIL. Residues 397–410 lie on the Extracellular side of the membrane; the sequence is NIHCDCNIPPVLYS. Cysteine 400 and cysteine 402 are joined by a disulfide. The helical transmembrane segment at 411-432 threads the bilayer; it reads AFTWLGYVNSAVNPIIYTTFNI. Over 433–444 the chain is Cytoplasmic; the sequence is EFRKAFMKILHC. Cysteine 444 is lipidated: S-palmitoyl cysteine.

The protein belongs to the G-protein coupled receptor 1 family. Forms homo- and heterooligomers with DRD4. The interaction with DRD4 may modulate agonist-induced downstream signaling. Interacts with CADPS and CADPS2. Interacts with GPRASP1, PPP1R9B and CLIC6. Interacts with ARRB2. Interacts with HTR2A. Interacts with DRD1. Interacts with KCNA2. Post-translationally, palmitoylated. Palmitoylation which is required for proper localization to the plasma membrane and stability of the receptor could be carried on by ZDHHC4, ZDHHC3 and ZDHHC8. As to expression, expressed in the anterior lobe of the pituitary gland. Expressed ventral tegmental area of the midbrain and the pars compacta of the substantia nigra. Expressed seven times more than isoform short in the caudate nucleus. Expressed in the anterior lobe of the pituitary gland. Expressed in the caudate nucleus. Not expressed in the wider brain.

It localises to the cell membrane. The protein resides in the golgi apparatus membrane. Dopamine receptor whose activity is mediated by G proteins which inhibit adenylyl cyclase. Positively regulates postnatal regression of retinal hyaloid vessels via suppression of VEGFR2/KDR activity, downstream of OPN5. The sequence is that of D(2) dopamine receptor (Drd2) from Rattus norvegicus (Rat).